The primary structure comprises 83 residues: Small integral membrane protein 22 (83 aa).

A helical membrane pass occupies residues 32–52; it reads VAFIVFLTFMGTVLLLLLLVV. The tract at residues 60–83 is disordered; that stretch reads SPGPRRESPRKERPKGVDNLALEP. Basic and acidic residues predominate over residues 63–75; that stretch reads PRRESPRKERPKG.

In terms of assembly, interacts with CANX and DDOST. Interacts with SQLE; this interaction modulates lipid droplet formation.

It localises to the membrane. Its subcellular location is the late endosome. Its function is as follows. May modulate lipid droplet formation throught interaction with SQLE. This chain is Small integral membrane protein 22, found in Homo sapiens (Human).